The following is an 815-amino-acid chain: Translation initiation factor IF-2 (815 aa).

The segment covering 153–176 has biased composition (basic and acidic residues); it reads VQEKEAEKKVEKLKTADKPKEGNK. The disordered stretch occupies residues 153–219; the sequence is VQEKEAEKKV…THLSQKIQAE (67 aa). A compositionally biased stretch (basic residues) spans 191–209; sequence KQLHVARHNPNRRLKKKDR. The tr-type G domain occupies 315 to 482; that stretch reads ARPPIVTIMG…AISLTAEILE (168 aa). A G1 region spans residues 324–331; sequence GHVDHGKT. 324–331 lines the GTP pocket; that stretch reads GHVDHGKT. Residues 349-353 form a G2 region; sequence GITQH. Residues 370–373 form a G3 region; sequence DTPG. GTP contacts are provided by residues 370-374 and 424-427; these read DTPGH and NKID. Residues 424-427 form a G4 region; that stretch reads NKID. Residues 460 to 462 form a G5 region; sequence SAH.

Belongs to the TRAFAC class translation factor GTPase superfamily. Classic translation factor GTPase family. IF-2 subfamily.

The protein localises to the cytoplasm. In terms of biological role, one of the essential components for the initiation of protein synthesis. Protects formylmethionyl-tRNA from spontaneous hydrolysis and promotes its binding to the 30S ribosomal subunits. Also involved in the hydrolysis of GTP during the formation of the 70S ribosomal complex. The protein is Translation initiation factor IF-2 of Vesicomyosocius okutanii subsp. Calyptogena okutanii (strain HA).